The following is a 136-amino-acid chain: Large ribosomal subunit protein uL16c (136 aa).

This sequence belongs to the universal ribosomal protein uL16 family. In terms of assembly, part of the 50S ribosomal subunit.

It localises to the plastid. Its subcellular location is the chloroplast. The sequence is that of Large ribosomal subunit protein uL16c from Chloranthus spicatus (Chulantree).